The following is a 384-amino-acid chain: DNA repair protein RAD51 homolog 2 (384 aa).

The interval 1–75 (MGSKKLKRVG…TAYGIKAQRS (75 aa)) is interaction with RAD51C. ATP is bound at residue 108-115 (GPPGCGKT).

The protein belongs to the RecA family. RAD51 subfamily. In terms of assembly, part of the BCDX2 complex consisting of RAD51B, RAD51C, RAD51D and XRCC2; the complex has a ring-like structure arranged into a flat disc around a central channel. The BCDX2 subcomplex RAD51B:RAD51C interacts with RAD51. Interacts with SWSAP1; involved in homologous recombination repair. Interacts with HELQ. In terms of processing, phosphorylated on tyrosine residues by BCR-ABL. As to expression, expressed in a wide range of tissues.

Its subcellular location is the nucleus. In terms of biological role, involved in the homologous recombination repair (HRR) pathway of double-stranded DNA breaks arising during DNA replication or induced by DNA-damaging agents. May promote the assembly of presynaptic RAD51 nucleoprotein filaments. Binds single-stranded DNA and double-stranded DNA and has DNA-dependent ATPase activity. Part of the RAD51 paralog protein complex BCDX2 which acts in the BRCA1-BRCA2-dependent HR pathway. Upon DNA damage, BCDX2 acts downstream of BRCA2 recruitment and upstream of RAD51 recruitment. BCDX2 binds predominantly to the intersection of the four duplex arms of the Holliday junction and to junction of replication forks. The BCDX2 complex was originally reported to bind single-stranded DNA, single-stranded gaps in duplex DNA and specifically to nicks in duplex DNA. The BCDX2 subcomplex RAD51B:RAD51C exhibits single-stranded DNA-dependent ATPase activity suggesting an involvement in early stages of the HR pathway. The chain is DNA repair protein RAD51 homolog 2 (RAD51B) from Homo sapiens (Human).